The sequence spans 560 residues: Synaptotagmin-5 (560 aa).

The helical transmembrane segment at 2-22 threads the bilayer; sequence GFIVGVVIGLLVGIAIIIGFV. One can recognise an SMP-LTD domain in the interval 67–249; it reads ERQKLTWLNH…WPVRKVIPII (183 aa). A phospholipid binding region spans residues 227 to 523; sequence EETIRDAVED…YIGRCILTLT (297 aa). 2 consecutive C2 domains span residues 243–364 and 417–535; these read RKVI…DVWL and TTDE…KDWY. Ca(2+) contacts are provided by Asp278, Asp284, Asp334, Glu336, Asp451, Asp457, Asp506, Asp508, and Asp513.

The protein belongs to the synaptotagmin family. Ca(2+) is required as a cofactor.

It is found in the membrane. In terms of biological role, may be involved in membrane trafficking. This chain is Synaptotagmin-5 (SYT5), found in Arabidopsis thaliana (Mouse-ear cress).